The following is a 163-amino-acid chain: Probable histone H2A.4 (163 aa).

2 disordered regions span residues 1-30 and 134-163; these read MEVG…VSRS and SAAA…AAAA. Residues 12–21 show a composition bias toward gly residues; sequence GAGGRRGGGG. Positions 147–163 are enriched in basic residues; that stretch reads KSPKKATTKSPKKAAAA. Short sequence motifs (SPKK motif) lie at residues 148 to 151 and 156 to 159; these read SPKK.

It belongs to the histone H2A family. As to quaternary structure, the nucleosome is a histone octamer containing two molecules each of H2A, H2B, H3 and H4 assembled in one H3-H4 heterotetramer and two H2A-H2B heterodimers. The octamer wraps approximately 147 bp of DNA.

Its subcellular location is the nucleus. The protein resides in the chromosome. Core component of nucleosome. Nucleosomes wrap and compact DNA into chromatin, limiting DNA accessibility to the cellular machineries which require DNA as a template. Histones thereby play a central role in transcription regulation, DNA repair, DNA replication and chromosomal stability. DNA accessibility is regulated via a complex set of post-translational modifications of histones, also called histone code, and nucleosome remodeling. The chain is Probable histone H2A.4 from Oryza sativa subsp. indica (Rice).